The following is a 535-amino-acid chain: Probable bifunctional tRNA threonylcarbamoyladenosine biosynthesis protein (535 aa).

The segment at 1 to 323 (MICLGLEGTA…YRTDMVEVNW (323 aa)) is kae1. Residues His106, His110, and Tyr127 each coordinate Fe cation. L-threonylcarbamoyladenylate contacts are provided by residues 127–131 (YVSGG), Asp159, Gly172, Glu176, and Asn256. A Fe cation-binding site is contributed by Asp284. Residues 333–535 (KIPEHLIGKG…DVERRARYVE (203 aa)) form the Protein kinase domain. ATP-binding positions include 339–347 (IGKGAEADI) and Lys360. Asp451 acts as the Proton acceptor; for kinase activity in catalysis.

It in the N-terminal section; belongs to the KAE1 / TsaD family. The protein in the C-terminal section; belongs to the protein kinase superfamily. Tyr protein kinase family. BUD32 subfamily. As to quaternary structure, component of the KEOPS complex that consists of Kae1, Bud32, Cgi121 and Pcc1; the whole complex dimerizes. It depends on Fe(2+) as a cofactor.

It localises to the cytoplasm. The enzyme catalyses L-seryl-[protein] + ATP = O-phospho-L-seryl-[protein] + ADP + H(+). The catalysed reaction is L-threonyl-[protein] + ATP = O-phospho-L-threonyl-[protein] + ADP + H(+). It catalyses the reaction L-threonylcarbamoyladenylate + adenosine(37) in tRNA = N(6)-L-threonylcarbamoyladenosine(37) in tRNA + AMP + H(+). Activity provided by the Kae1 region seems to be regulated via phosphorylation by the protein kinase Bud32, which is itself activated by Cgi121. Required for the formation of a threonylcarbamoyl group on adenosine at position 37 (t(6)A37) in tRNAs that read codons beginning with adenine. Is a component of the KEOPS complex that is probably involved in the transfer of the threonylcarbamoyl moiety of threonylcarbamoyl-AMP (TC-AMP) to the N6 group of A37. The Kae1 domain likely plays a direct catalytic role in this reaction. The Bud32 domain probably displays kinase activity that regulates Kae1 function. In vitro, exhibits low ATPase activity, but does not bind DNA and does not have endonuclease activity. The chain is Probable bifunctional tRNA threonylcarbamoyladenosine biosynthesis protein from Methanocaldococcus jannaschii (strain ATCC 43067 / DSM 2661 / JAL-1 / JCM 10045 / NBRC 100440) (Methanococcus jannaschii).